A 426-amino-acid polypeptide reads, in one-letter code: Chromatin structure-remodeling complex subunit SFH1 (426 aa).

A Phosphoserine modification is found at Ser-78. The segment at 201 to 242 (AIMIPITLDIEHMGHTIKDQFLWNYNDDSISPEEFASIYCKD) is interaction with STH1.

It belongs to the SNF5 family. In terms of assembly, interacts directly with STH1. Component of the two forms of the RSC complex composed of at least either RSC1 or RSC2, and ARP7, ARP9, LDB7, NPL6, RSC3, RSC30, RSC4, RSC58, RSC6, RSC8, RSC9, SFH1, STH1, HTL1 and probably RTT102. The complexes interact with histone and histone variant components of centromeric chromatin. Post-translationally, phosphorylated in the G1 phase.

Its subcellular location is the nucleus. Component of the chromatin structure-remodeling complex (RSC), which is involved in transcription regulation and nucleosome positioning. RSC is responsible for the transfer of a histone octamer from a nucleosome core particle to naked DNA. The reaction requires ATP and involves an activated RSC-nucleosome intermediate. Remodeling reaction also involves DNA translocation, DNA twist and conformational change. As a reconfigurer of centromeric and flanking nucleosomes, RSC complex is required both for proper kinetochore function in chromosome segregation and, via a PKC1-dependent signaling pathway, for organization of the cellular cytoskeleton. This subunit is essential for mitotic growth and required for cell cycle progression. The sequence is that of Chromatin structure-remodeling complex subunit SFH1 (SFH1) from Saccharomyces cerevisiae (strain ATCC 204508 / S288c) (Baker's yeast).